The following is a 414-amino-acid chain: 2,3-diketo-5-methylthiopentyl-1-phosphate enolase (414 aa).

Catalysis depends on Lys99, which acts as the Proton acceptor. Residues Lys148, 174-177 (KDDE), His265, Gly338, and 360-361 (GG) each bind substrate. Mg(2+) is bound by residues Lys174, Asp176, and Glu177. Lys174 bears the N6-carboxylysine mark.

The protein belongs to the RuBisCO large chain family. Type IV subfamily. In terms of assembly, homodimer. The cofactor is Mg(2+).

It carries out the reaction 5-methylsulfanyl-2,3-dioxopentyl phosphate = 2-hydroxy-5-methylsulfanyl-3-oxopent-1-enyl phosphate. The protein operates within amino-acid biosynthesis; L-methionine biosynthesis via salvage pathway; L-methionine from S-methyl-5-thio-alpha-D-ribose 1-phosphate: step 3/6. Its function is as follows. Catalyzes the enolization of 2,3-diketo-5-methylthiopentyl-1-phosphate (DK-MTP-1-P) into 2-hydroxy-3-keto-5-methylthiopentenyl-1-phosphate (HK-MTPenyl-1-P). This chain is 2,3-diketo-5-methylthiopentyl-1-phosphate enolase, found in Bacillus anthracis (strain CDC 684 / NRRL 3495).